A 653-amino-acid chain; its full sequence is Leishmanolysin homolog (653 aa).

Residues 1–44 form the signal peptide; it reads MHAPPTATRRSGPRRTHGIMARLVRLAAGVLVVTLVIGALTALS. Residues 45–113 constitute a propeptide, activation peptide; the sequence is ADDAKTHPHK…ALAGDSAPDV (69 aa). 2 cysteine pairs are disulfide-bonded: Cys138/Cys155 and Cys203/Cys242. Residue His276 coordinates Zn(2+). Glu277 is a catalytic residue. Zn(2+)-binding residues include His280 and His346. Disulfide bonds link Cys326/Cys398, Cys405/Cys468, Cys418/Cys437, Cys427/Cys502, Cys479/Cys524, Cys529/Cys579, and Cys549/Cys572. 2 N-linked (GlcNAc...) asparagine glycosylation sites follow: Asn383 and Asn409. Residue Asn569 is glycosylated (N-linked (GlcNAc...) asparagine). The tract at residues 590 to 631 is disordered; the sequence is ESMTNSGSGSSRPAPVEPSGSGSGSSAATTAPSPTRDGSAAA. Positions 591–600 are enriched in polar residues; sequence SMTNSGSGSS. Residues 607-631 are compositionally biased toward low complexity; the sequence is PSGSGSGSSAATTAPSPTRDGSAAA. The GPI-anchor amidated serine moiety is linked to residue Ser628. The propeptide at 629-653 is removed in mature form; it reads AAADRIAPRTAAVALLALAVAAACV.

Belongs to the peptidase M8 family. The cofactor is Zn(2+).

The protein localises to the cell membrane. It catalyses the reaction Preference for hydrophobic residues at P1 and P1' and basic residues at P2' and P3'. A model nonapeptide is cleaved at -Ala-Tyr-|-Leu-Lys-Lys-.. Its function is as follows. Plays an integral role during the infection of macrophages in the mammalian host. The polypeptide is Leishmanolysin homolog (gp63) (Crithidia fasciculata).